We begin with the raw amino-acid sequence, 440 residues long: Transposon Ty1-DR3 Gag polyprotein (440 aa).

Composition is skewed to polar residues over residues methionine 1–proline 10, threonine 48–serine 60, and glutamine 127–phenylalanine 152. Disordered regions lie at residues methionine 1–glutamine 93, proline 126–proline 173, and glycine 352–tyrosine 440. A compositionally biased stretch (low complexity) spans threonine 153–threonine 165. The RNA-binding stretch occupies residues asparagine 299–histidine 401. The span at asparagine 402–asparagine 428 shows a compositional bias: polar residues. The residue at position 416 (serine 416) is a Phosphoserine. A compositionally biased stretch (basic and acidic residues) spans asparagine 429–tyrosine 440.

In terms of assembly, homotrimer.

It localises to the cytoplasm. Its function is as follows. Capsid protein (CA) is the structural component of the virus-like particle (VLP), forming the shell that encapsulates the retrotransposons dimeric RNA genome. The particles are assembled from trimer-clustered units and there are holes in the capsid shells that allow for the diffusion of macromolecules. CA also has nucleocapsid-like chaperone activity, promoting primer tRNA(i)-Met annealing to the multipartite primer-binding site (PBS), dimerization of Ty1 RNA and initiation of reverse transcription. The protein is Transposon Ty1-DR3 Gag polyprotein (TY1A-DR3) of Saccharomyces cerevisiae (strain ATCC 204508 / S288c) (Baker's yeast).